Consider the following 243-residue polypeptide: Aspartate/glutamate leucyltransferase (243 aa).

The protein belongs to the R-transferase family. Bpt subfamily.

It is found in the cytoplasm. The enzyme catalyses N-terminal L-glutamyl-[protein] + L-leucyl-tRNA(Leu) = N-terminal L-leucyl-L-glutamyl-[protein] + tRNA(Leu) + H(+). The catalysed reaction is N-terminal L-aspartyl-[protein] + L-leucyl-tRNA(Leu) = N-terminal L-leucyl-L-aspartyl-[protein] + tRNA(Leu) + H(+). Functions in the N-end rule pathway of protein degradation where it conjugates Leu from its aminoacyl-tRNA to the N-termini of proteins containing an N-terminal aspartate or glutamate. This chain is Aspartate/glutamate leucyltransferase, found in Teredinibacter turnerae (strain ATCC 39867 / T7901).